Reading from the N-terminus, the 103-residue chain is MATYAIVKTGGKQYKVAVGDVVKVEKLESEQGEKVSLPVALVVDGATVTTDAKALAKVAVTGEVLGHTKGPKIRIHKFKNKTGYHKRQGHRQQLTVLKVTGIA.

It belongs to the bacterial ribosomal protein bL21 family. In terms of assembly, part of the 50S ribosomal subunit. Contacts protein L20.

Functionally, this protein binds to 23S rRNA in the presence of protein L20. The sequence is that of Large ribosomal subunit protein bL21 from Mycobacterium tuberculosis (strain ATCC 25618 / H37Rv).